Reading from the N-terminus, the 550-residue chain is MASSRILITSALPYANGPLHFGHITGAYLPADVYARFQRLLGKEVLYICGSDEYGIAITLNAELAGMGYQEYVDMYHKLHKDTLKKLGISVDFFSRTTNPHHPAIVQDFYRNLQDKGLMENLVTDQLYSEEEEKFLADRYVVGTCPKCGFDRARGDECQQCGADYEARDLKDPRSKLTGKALSLRETEHAYFHLERMKEELLTFVEGIYLRPHMRNFVIDYIKNLRPRAVTRDLSWGVPVPGLENKVFYVWFDAPIGYISGTMDWAASIGDPDAWKKFWLDDKVTYTQFVGKDNTSFHSVIFPAMEMGQSLPYKKVDALVTSEFLLLEGFQFSKSEGNIIDMDAFLETYSLDKLRYVLAAIAPETSDSEFAFQEFKTRCNSDLVGKFGNFVNRVVAFAAKNGCTELSHPQLEQQDLEFIAEAQKLAKEAADHYQQYSLRKACSTIMELAALGNGYFNDQAPWKLAKEDLWNRVRSILFCACYCQKLLALISYPIMPETAWTIWGMIAPGSLDLRSQDPERLQSIWTEAFFDYSEESFSLKEPELLFTVVE.

The 'HIGH' region signature appears at 13 to 23 (PYANGPLHFGH). Zn(2+)-binding residues include Cys145, Cys148, Cys158, and Cys161. The short motif at 331 to 335 (QFSKS) is the 'KMSKS' region element. An ATP-binding site is contributed by Lys334.

This sequence belongs to the class-I aminoacyl-tRNA synthetase family. MetG type 1 subfamily. In terms of assembly, monomer. Requires Zn(2+) as cofactor.

It localises to the cytoplasm. It catalyses the reaction tRNA(Met) + L-methionine + ATP = L-methionyl-tRNA(Met) + AMP + diphosphate. Is required not only for elongation of protein synthesis but also for the initiation of all mRNA translation through initiator tRNA(fMet) aminoacylation. The protein is Methionine--tRNA ligase (metG) of Chlamydia muridarum (strain MoPn / Nigg).